The primary structure comprises 1293 residues: Phosphoribosylformylglycinamidine synthase (1293 aa).

ATP-binding positions include 305-316 (GAATGSGGEIRD) and alanine 676. Residues 305–327 (GAATGSGGEIRDEGATGRGSKPK) form a disordered region. The Mg(2+) site is built by aspartate 677, glutamate 716, asparagine 720, and aspartate 884. Serine 886 contacts ATP. In terms of domain architecture, Glutamine amidotransferase type-1 spans 1040–1293 (MAILREQGVN…MFRNARVNLG (254 aa)). The Nucleophile role is filled by cysteine 1133. Catalysis depends on residues histidine 1258 and glutamate 1260.

In the N-terminal section; belongs to the FGAMS family. Monomer.

The protein resides in the cytoplasm. The catalysed reaction is N(2)-formyl-N(1)-(5-phospho-beta-D-ribosyl)glycinamide + L-glutamine + ATP + H2O = 2-formamido-N(1)-(5-O-phospho-beta-D-ribosyl)acetamidine + L-glutamate + ADP + phosphate + H(+). The protein operates within purine metabolism; IMP biosynthesis via de novo pathway; 5-amino-1-(5-phospho-D-ribosyl)imidazole from N(2)-formyl-N(1)-(5-phospho-D-ribosyl)glycinamide: step 1/2. Phosphoribosylformylglycinamidine synthase involved in the purines biosynthetic pathway. Catalyzes the ATP-dependent conversion of formylglycinamide ribonucleotide (FGAR) and glutamine to yield formylglycinamidine ribonucleotide (FGAM) and glutamate. The polypeptide is Phosphoribosylformylglycinamidine synthase (Shewanella sp. (strain MR-4)).